We begin with the raw amino-acid sequence, 995 residues long: DExH-box ATP-dependent RNA helicase DExH1 (995 aa).

2 disordered regions span residues 1 to 42 (MPPH…EQRW) and 156 to 192 (KTTQ…ASKL). Over residues 25–37 (RGGGGRGGGGGGR) the composition is skewed to gly residues. Positions 161-170 (SGSSGASASA) are enriched in low complexity. Over residues 171-181 (FNDQQDRTSTL) the composition is skewed to polar residues. The Helicase ATP-binding domain occupies 238–405 (LNSVSQNQVL…FGNSPTMHIP (168 aa)). ATP is bound at residue 251 to 258 (GETGCGKT). Positions 352-355 (DEIH) match the DEIH box motif. Positions 429–450 (SSDSGNYQGSSRGRRRESESKK) are disordered. The 180-residue stretch at 484 to 663 (QIDVDLVEAT…ELCLHIKSLQ (180 aa)) folds into the Helicase C-terminal domain.

Belongs to the DExH box helicase family.

The catalysed reaction is ATP + H2O = ADP + phosphate + H(+). The sequence is that of DExH-box ATP-dependent RNA helicase DExH1 from Arabidopsis thaliana (Mouse-ear cress).